A 211-amino-acid chain; its full sequence is Ubiquitin-conjugating enzyme E2 S (211 aa).

Residues 11–157 (HVIRQVYKEV…ARLMTEIHAH (147 aa)) form the UBC core domain. C95 acts as the Glycyl thioester intermediate in catalysis. The span at 157 to 167 (HSSSLRGKDPT) shows a compositional bias: basic and acidic residues. The segment at 157-211 (HSSSLRGKDPTDPCSSASVTGALGDGPMAKKHAGDRDKKLAAKKKTDKKRALRRL) is disordered. The span at 197–211 (AAKKKTDKKRALRRL) shows a compositional bias: basic residues.

The protein belongs to the ubiquitin-conjugating enzyme family.

It carries out the reaction S-ubiquitinyl-[E1 ubiquitin-activating enzyme]-L-cysteine + [E2 ubiquitin-conjugating enzyme]-L-cysteine = [E1 ubiquitin-activating enzyme]-L-cysteine + S-ubiquitinyl-[E2 ubiquitin-conjugating enzyme]-L-cysteine.. It functions in the pathway protein modification; protein ubiquitination. Functionally, catalyzes the covalent attachment of ubiquitin to other proteins. Acts as an essential factor of the anaphase promoting complex/cyclosome (APC/C), a cell cycle-regulated ubiquitin ligase that controls progression through mitosis. Acts by specifically elongating 'Lys-11'-linked polyubiquitin chains initiated by the E2 enzyme ube2c/ubch10 on APC/C substrates, enhancing the degradation of APC/C substrates by the proteasome and promoting mitotic exit. The chain is Ubiquitin-conjugating enzyme E2 S (ube2s) from Aquarana catesbeiana (American bullfrog).